A 156-amino-acid polypeptide reads, in one-letter code: Arginine repressor (156 aa).

Belongs to the ArgR family.

Its subcellular location is the cytoplasm. The protein operates within amino-acid biosynthesis; L-arginine biosynthesis [regulation]. Regulates arginine biosynthesis genes. This chain is Arginine repressor, found in Vibrio vulnificus (strain CMCP6).